The chain runs to 456 residues: Bifunctional protein GlmU (456 aa).

Positions 1-228 are pyrophosphorylase; it reads MTLPLHVLIL…PQDVEGANDP (228 aa). UDP-N-acetyl-alpha-D-glucosamine contacts are provided by residues 10 to 13, Lys-24, Gln-76, 81 to 82, 103 to 105, Gly-138, Glu-153, Asn-168, and Asn-226; these read LAAG, GT, and YGD. Residue Asp-105 participates in Mg(2+) binding. Residue Asn-226 coordinates Mg(2+). A linker region spans residues 229 to 249; the sequence is WQLAQLERAWQLRAARTLCLQ. Positions 250–456 are N-acetyltransferase; sequence GVRMADPARV…GWKRPTKKSP (207 aa). Residues Arg-332 and Lys-350 each coordinate UDP-N-acetyl-alpha-D-glucosamine. His-362 functions as the Proton acceptor in the catalytic mechanism. Positions 365 and 376 each coordinate UDP-N-acetyl-alpha-D-glucosamine. Residues Ala-379, 385 to 386, Ser-404, Ala-422, and Arg-439 each bind acetyl-CoA; that span reads NY.

It in the N-terminal section; belongs to the N-acetylglucosamine-1-phosphate uridyltransferase family. The protein in the C-terminal section; belongs to the transferase hexapeptide repeat family. In terms of assembly, homotrimer. Mg(2+) is required as a cofactor.

It is found in the cytoplasm. The catalysed reaction is alpha-D-glucosamine 1-phosphate + acetyl-CoA = N-acetyl-alpha-D-glucosamine 1-phosphate + CoA + H(+). It catalyses the reaction N-acetyl-alpha-D-glucosamine 1-phosphate + UTP + H(+) = UDP-N-acetyl-alpha-D-glucosamine + diphosphate. The protein operates within nucleotide-sugar biosynthesis; UDP-N-acetyl-alpha-D-glucosamine biosynthesis; N-acetyl-alpha-D-glucosamine 1-phosphate from alpha-D-glucosamine 6-phosphate (route II): step 2/2. Its pathway is nucleotide-sugar biosynthesis; UDP-N-acetyl-alpha-D-glucosamine biosynthesis; UDP-N-acetyl-alpha-D-glucosamine from N-acetyl-alpha-D-glucosamine 1-phosphate: step 1/1. It functions in the pathway bacterial outer membrane biogenesis; LPS lipid A biosynthesis. Catalyzes the last two sequential reactions in the de novo biosynthetic pathway for UDP-N-acetylglucosamine (UDP-GlcNAc). The C-terminal domain catalyzes the transfer of acetyl group from acetyl coenzyme A to glucosamine-1-phosphate (GlcN-1-P) to produce N-acetylglucosamine-1-phosphate (GlcNAc-1-P), which is converted into UDP-GlcNAc by the transfer of uridine 5-monophosphate (from uridine 5-triphosphate), a reaction catalyzed by the N-terminal domain. This chain is Bifunctional protein GlmU, found in Xanthomonas axonopodis pv. citri (strain 306).